The primary structure comprises 492 residues: Amphoterin-induced protein 1 (492 aa).

A signal peptide spans 1-27 (MQPQRDLRGLWLLLLSVFLLLFEVARA). In terms of domain architecture, LRRNT spans 28–61 (GRSVVSCPANCLCASNILSCSKQQLPNVPQSLPS). At 28–371 (GRSVVSCPAN…LHGHHDTLNT (344 aa)) the chain is on the extracellular side. Intrachain disulfides connect C34-C40 and C38-C47. LRR repeat units follow at residues 62–83 (YTAL…WTPT), 87–108 (NLHS…AFVP), 111–132 (NLRY…LFSD), 135–156 (ALEV…AFED), 159–180 (QLQK…LIKD), and 186–206 (KLML…TDLQ). N-linked (GlcNAc...) asparagine glycosylation occurs at N72. The LRRCT domain occupies 208 to 272 (LPAWVKNGLY…FSLDFFNCSE (65 aa)). Cystine bridges form between C225/C253, C227/C270, and C290/C340. N-linked (GlcNAc...) asparagine glycosylation is found at N269, N315, N348, and N359. In terms of domain architecture, Ig-like C2-type spans 269-352 (NCSEYKESAW…MGETFNETLS (84 aa)). Residues 372-392 (AYTTLVGCILSVVLVLIYLYL) form a helical membrane-spanning segment. Topologically, residues 393–492 (TPCRCWCRGV…SVFSDTPIVV (100 aa)) are cytoplasmic. A disordered region spans residues 404–492 (KPSSHQGDSL…SVFSDTPIVV (89 aa)). The segment covering 407-423 (SHQGDSLSSSMLSTTPN) has biased composition (polar residues). The segment covering 430–441 (GDKDDGFDRRVA) has biased composition (basic and acidic residues). Residues S476 and S480 each carry the phosphoserine modification.

The protein belongs to the immunoglobulin superfamily. AMIGO family. Homodimer, and heterodimer with AMIGO2 and AMIGO3. Interacts with KCNB1. Expressed in hippocampal and cortical neurons (at protein level). High levels in cerebellum, cerebrum, and retina. Low levels in liver, kidney, small intestine, spleen, lung and heart.

The protein resides in the cell membrane. The protein localises to the perikaryon. It localises to the cell projection. Its subcellular location is the dendrite. Its function is as follows. Promotes growth and fasciculation of neurites from cultured hippocampal neurons. May be involved in fasciculation as well as myelination of developing neural axons. May have a role in regeneration as well as neural plasticity in the adult nervous system. May mediate homophilic as well as heterophilic cell-cell interaction and contribute to signal transduction through its intracellular domain. Assembled with KCNB1 modulates the gating characteristics of the delayed rectifier voltage-dependent potassium channel KCNB1. This Mus musculus (Mouse) protein is Amphoterin-induced protein 1.